The chain runs to 292 residues: DSC E3 ubiquitin ligase complex subunit 3 (292 aa).

Over 1–243 the chain is Extracellular; it reads MSAEPLLPTH…PIANIKHNKD (243 aa). 5 N-linked (GlcNAc...) asparagine glycosylation sites follow: Asn-11, Asn-41, Asn-77, Asn-99, and Asn-145. Residues 244 to 264 traverse the membrane as a helical segment; the sequence is LLLGICVGFFFGVFGILLMKF. Topologically, residues 265–273 are cytoplasmic; that stretch reads DGLFNRRQK. Residues 274-291 traverse the membrane as a helical segment; sequence MAIFAGVIVNVMFCLVRG. Phe-292 is a topological domain (extracellular).

It belongs to the dsc3 family. As to quaternary structure, component of the DSC E3 ligase complexes composed of at least TUL1, DSC2, DSC3, UBX3, CDC48 as well as VLD1 for the vacuole-localized complex or GLD1 for the Golgi/endosome-localized complex.

It is found in the endoplasmic reticulum membrane. Functionally, component of the DSC E3 ubiquitin ligase complexes that tag proteins present in Golgi, endosome and vacuole membranes and function in protein homeostasis under non-stress conditions and support a role in protein quality control. Involved in endocytic protein trafficking. The protein is DSC E3 ubiquitin ligase complex subunit 3 of Saccharomyces cerevisiae (strain ATCC 204508 / S288c) (Baker's yeast).